Reading from the N-terminus, the 175-residue chain is Small ribosomal subunit protein uS7 (175 aa).

Belongs to the universal ribosomal protein uS7 family. In terms of assembly, part of the 30S ribosomal subunit. Contacts proteins S9 and S11.

In terms of biological role, one of the primary rRNA binding proteins, it binds directly to 16S rRNA where it nucleates assembly of the head domain of the 30S subunit. Is located at the subunit interface close to the decoding center, probably blocks exit of the E-site tRNA. The polypeptide is Small ribosomal subunit protein uS7 (Legionella pneumophila (strain Paris)).